A 258-amino-acid polypeptide reads, in one-letter code: Exu regulon transcriptional regulator (258 aa).

The 69-residue stretch at 7–75 (RRLYQQLAAD…KGSGIHVVSN (69 aa)) folds into the HTH gntR-type domain. A DNA-binding region (H-T-H motif) is located at residues 35 to 54 (ERFIADEKNVSRTVVREAII).

In terms of biological role, repressor for the exu regulon that encode genes involved in hexuronate utilization. It regulates the ExuT, UxaCA and UxuRAB operons. Binds D-tagaturonate and D-fructuronate as inducers. The sequence is that of Exu regulon transcriptional regulator (exuR) from Escherichia coli O157:H7.